The primary structure comprises 396 residues: Elongation factor Tu (396 aa).

A tr-type G domain is found at 10 to 206 (KPHVNVGTIG…ALDSYIPDPE (197 aa)). Positions 19-26 (GHVDHGKT) are G1. 19 to 26 (GHVDHGKT) is a binding site for GTP. Thr-26 serves as a coordination point for Mg(2+). Positions 60 to 64 (GITIN) are G2. The interval 81-84 (DCPG) is G3. Residues 81 to 85 (DCPGH) and 136 to 139 (NKCD) contribute to the GTP site. The G4 stretch occupies residues 136 to 139 (NKCD). Positions 174–176 (SAL) are G5.

It belongs to the TRAFAC class translation factor GTPase superfamily. Classic translation factor GTPase family. EF-Tu/EF-1A subfamily. As to quaternary structure, monomer.

It is found in the cytoplasm. The catalysed reaction is GTP + H2O = GDP + phosphate + H(+). Functionally, GTP hydrolase that promotes the GTP-dependent binding of aminoacyl-tRNA to the A-site of ribosomes during protein biosynthesis. The chain is Elongation factor Tu from Dechloromonas aromatica (strain RCB).